Here is a 150-residue protein sequence, read N- to C-terminus: Protein SprT-like (150 aa).

The 142-residue stretch at 6 to 147 folds into the SprT-like domain; sequence LQKLTEDISE…CGKCRGKIKR (142 aa). H67 is a binding site for Zn(2+). The active site involves E68. Position 71 (H71) interacts with Zn(2+).

This sequence belongs to the SprT family. It depends on Zn(2+) as a cofactor.

It is found in the cytoplasm. The chain is Protein SprT-like (ydcK) from Bacillus subtilis (strain 168).